We begin with the raw amino-acid sequence, 235 residues long: Matrix protein (235 aa).

It belongs to the nucleorhabdovirus type-2 matrix protein family. In terms of assembly, homomultimer. Interacts with nucleoprotein and with the cytoplasmic domain of glycoprotein.

The protein resides in the virion membrane. It localises to the host endomembrane system. Its function is as follows. Plays a major role in assembly and budding of virion. Completely covers the ribonucleoprotein coil and keep it in condensed bullet-shaped form. Inhibits viral transcription and stimulates replication. In Colocasia esculenta (Wild taro), this protein is Matrix protein (M).